The primary structure comprises 386 residues: Demethylsterigmatocystin 6-O-methyltransferase (386 aa).

137–150 (FDISGPCTQILPDF) lines the substrate pocket. A substrate binding region spans residues 177–197 (MFEWMPQHPKHMESLGHLMAL). S-adenosyl-L-methionine contacts are provided by residues 228 to 229 (GG), aspartate 253, 273 to 274 (NF), and arginine 289. Histidine 293 (proton acceptor) is an active-site residue.

Belongs to the class I-like SAM-binding methyltransferase superfamily. Cation-independent O-methyltransferase family. COMT subfamily.

It catalyses the reaction 6-demethylsterigmatocystin + S-adenosyl-L-methionine = sterigmatocystin + S-adenosyl-L-homocysteine + H(+). The protein operates within mycotoxin biosynthesis; aflatoxin biosynthesis. Demethylsterigmatocystin 6-O-methyltransferase; part of the gene cluster that mediates the biosynthesis of aflatoxins, a group of polyketide-derived furanocoumarins, and part of the most toxic and carcinogenic compounds among the known mycotoxins. The four major aflatoxins produced by A.parasiticus are aflatoxin B1 (AFB1), aflatoxin B2 (AFB2), aflatoxin G1 (AFG1) and aflatoxin G2 (AFG2). Within the aflatoxin pathway, the methyltransferase aflO then catalyzes the modification of demethylsterigmatocystin (DMST) to sterigmatocystin (ST), and of dihydrodemethylsterigmatocystin (DMDHST) to dihydrosterigmatocystin (DHST). The biosynthesis of aflatoxins begins with the norsolorinic acid synthase aflC that combines a hexanoyl starter unit produced by the fatty acid synthase aflA/aflB and 7 malonyl-CoA extender units to synthesize the precursor NOR. The second step is the conversion of NOR to averantin and requires the norsolorinic acid ketoreductase aflD, which catalyzes the dehydration of norsolorinic acid to form (1'S)-averantin. The norsolorinic acid reductases aflE and aflF may also play a role in the conversion of NOR to AVN. The cytochrome P450 monooxygenase aflG then catalyzes the hydroxylation of AVN to 5'hydroxyaverantin (HAVN). The next step is performed by the 5'-hydroxyaverantin dehydrogenase aflH that transforms HAVN to 5'-oxoaverantin (OAVN) which is further converted to averufin (AVF) by aflK that plays a dual role in the pathway, as a 5'-oxoaverantin cyclase that mediates conversion of 5'-oxoaverantin, as well as a versicolorin B synthase in a later step in the pathway. The averufin oxidase aflI catalyzes the conversion of AVF to versiconal hemiacetal acetate (VHA). VHA is then the substrate for the versiconal hemiacetal acetate esterase aflJ to yield versiconal (VAL). Versicolorin B synthase aflK then converts VAL to versicolorin B (VERB) by closing the bisfuran ring of aflatoxin which is required for DNA-binding, thus giving to aflatoxin its activity as a mutagen. Then, the activity of the versicolorin B desaturase aflL leads to versicolorin A (VERA). A branch point starts from VERB since it can also be converted to dihydrodemethylsterigmatocystin (DMDHST), probably also by aflL, VERA being a precursor for aflatoxins B1 and G1, and DMDHST for aflatoxins B2 and G2. Next, the versicolorin reductase aflM and the cytochrome P450 monooxygenase aflN are involved in conversion of VERA to demethylsterigmatocystin (DMST). AflX and aflY seem also involved in this step, through probable aflX-mediated epoxide ring-opening step following versicolorin A oxidation and aflY-mediated Baeyer-Villiger oxidation required for the formation of the xanthone ring. The methyltransferase aflO then leads to the modification of DMST to sterigmatocystin (ST), and of DMDHST to dihydrosterigmatocystin (DHST). Both ST and DHST are then substrates of the O-methyltransferase aflP to yield O-methylsterigmatocystin (OMST) and dihydro-O-methylsterigmatocystin (DHOMST), respectively. Finally OMST is converted to aflatoxins B1 and G1, and DHOMST to aflatoxins B2 and G2, via the action of several enzymes including O-methylsterigmatocystin oxidoreductase aflQ, the cytochrome P450 monooxygenase aflU, but also the NADH-dependent flavin oxidoreductase nadA which is specifically required for the synthesis of AFG1. This chain is Demethylsterigmatocystin 6-O-methyltransferase, found in Aspergillus parasiticus (strain ATCC 56775 / NRRL 5862 / SRRC 143 / SU-1).